We begin with the raw amino-acid sequence, 180 residues long: Large ribosomal subunit protein uL6 (180 aa).

It belongs to the universal ribosomal protein uL6 family. In terms of assembly, part of the 50S ribosomal subunit.

This protein binds to the 23S rRNA, and is important in its secondary structure. It is located near the subunit interface in the base of the L7/L12 stalk, and near the tRNA binding site of the peptidyltransferase center. This chain is Large ribosomal subunit protein uL6, found in Thermoanaerobacter sp. (strain X514).